Consider the following 154-residue polypeptide: 17 kDa surface antigen (154 aa).

The signal sequence occupies residues 1–19; the sequence is MKLLSKIMIIALAASMLQA. Residue Cys20 is the site of N-palmitoyl cysteine attachment. Cys20 carries the S-diacylglycerol cysteine lipid modification.

This sequence belongs to the rickettsiale 17 kDa surface antigen family.

The protein resides in the cell outer membrane. This chain is 17 kDa surface antigen (omp), found in Rickettsia australis.